Reading from the N-terminus, the 220-residue chain is CASP-like protein 4B1 (220 aa).

The Cytoplasmic segment spans residues 1-74; the sequence is MAMVTTEAAA…RWRREDMLDK (74 aa). A disordered region spans residues 13–56; the sequence is TTAATAAAEKPQDVEKPDYAPYNGASTTADGGTGARARRGDGGG. Residues 75 to 95 form a helical membrane-spanning segment; the sequence is SPLALHAAAAIFAFVALVLVA. At 96–109 the chain is on the extracellular side; it reads SNQHGDWMQFDRYQ. A helical membrane pass occupies residues 110-127; that stretch reads EYRYLLAIASLALLYSLA. Residues 128-152 lie on the Cytoplasmic side of the membrane; the sequence is QAARHAHRMRGGVDPVSSASARLLD. The helical transmembrane segment at 153-173 threads the bilayer; sequence FVGDQVVAYLLMSALSAAVPI. Topologically, residues 174-188 are extracellular; that stretch reads TNRMRSAVVNNFTDA. Asparagine 184 carries N-linked (GlcNAc...) asparagine glycosylation. Residues 189–209 traverse the membrane as a helical segment; that stretch reads TAAAISMAFFSFVALALSAVV. The Cytoplasmic segment spans residues 210-220; that stretch reads SGYKLSKQTYM.

Belongs to the Casparian strip membrane proteins (CASP) family. As to quaternary structure, homodimer and heterodimers.

The protein resides in the cell membrane. The polypeptide is CASP-like protein 4B1 (Sorghum bicolor (Sorghum)).